Here is a 424-residue protein sequence, read N- to C-terminus: Phosphoribosylamine--glycine ligase (424 aa).

In terms of domain architecture, ATP-grasp spans 111-312 (KAFVKECGIK…LLDLFLATAK (202 aa)). Position 137–189 (137–189 (IQNASFPLVIKALNKNTSIVHHQEEALKILEDALKQSNEPVIIEPFLEGFELS)) interacts with ATP.

This sequence belongs to the GARS family.

The catalysed reaction is 5-phospho-beta-D-ribosylamine + glycine + ATP = N(1)-(5-phospho-beta-D-ribosyl)glycinamide + ADP + phosphate + H(+). It participates in purine metabolism; IMP biosynthesis via de novo pathway; N(1)-(5-phospho-D-ribosyl)glycinamide from 5-phospho-alpha-D-ribose 1-diphosphate: step 2/2. This chain is Phosphoribosylamine--glycine ligase (purD), found in Helicobacter pylori (strain J99 / ATCC 700824) (Campylobacter pylori J99).